Reading from the N-terminus, the 226-residue chain is Deoxyribose-phosphate aldolase (226 aa).

The active-site Proton donor/acceptor is the aspartate 84. Catalysis depends on lysine 146, which acts as the Schiff-base intermediate with acetaldehyde. Lysine 188 serves as the catalytic Proton donor/acceptor.

Belongs to the DeoC/FbaB aldolase family. DeoC type 1 subfamily.

The protein localises to the cytoplasm. The enzyme catalyses 2-deoxy-D-ribose 5-phosphate = D-glyceraldehyde 3-phosphate + acetaldehyde. The protein operates within carbohydrate degradation; 2-deoxy-D-ribose 1-phosphate degradation; D-glyceraldehyde 3-phosphate and acetaldehyde from 2-deoxy-alpha-D-ribose 1-phosphate: step 2/2. In terms of biological role, catalyzes a reversible aldol reaction between acetaldehyde and D-glyceraldehyde 3-phosphate to generate 2-deoxy-D-ribose 5-phosphate. The chain is Deoxyribose-phosphate aldolase from Pyrobaculum arsenaticum (strain DSM 13514 / JCM 11321 / PZ6).